The following is a 249-amino-acid chain: 1-(5-phosphoribosyl)-5-[(5-phosphoribosylamino)methylideneamino] imidazole-4-carboxamide isomerase (249 aa).

The Proton acceptor role is filled by Asp-11. The active-site Proton donor is Asp-133.

Belongs to the HisA/HisF family.

The protein resides in the cytoplasm. It carries out the reaction 1-(5-phospho-beta-D-ribosyl)-5-[(5-phospho-beta-D-ribosylamino)methylideneamino]imidazole-4-carboxamide = 5-[(5-phospho-1-deoxy-D-ribulos-1-ylimino)methylamino]-1-(5-phospho-beta-D-ribosyl)imidazole-4-carboxamide. It participates in amino-acid biosynthesis; L-histidine biosynthesis; L-histidine from 5-phospho-alpha-D-ribose 1-diphosphate: step 4/9. In Actinobacillus succinogenes (strain ATCC 55618 / DSM 22257 / CCUG 43843 / 130Z), this protein is 1-(5-phosphoribosyl)-5-[(5-phosphoribosylamino)methylideneamino] imidazole-4-carboxamide isomerase.